We begin with the raw amino-acid sequence, 357 residues long: tRNA-specific 2-thiouridylase MnmA (357 aa).

Residues 7-14 (AMSGGVDS) and M33 each bind ATP. Catalysis depends on C101, which acts as the Nucleophile. The cysteines at positions 101 and 198 are disulfide-linked. An ATP-binding site is contributed by G125. The segment at 148 to 150 (KDQ) is interaction with tRNA. C198 functions as the Cysteine persulfide intermediate in the catalytic mechanism.

Belongs to the MnmA/TRMU family.

The protein resides in the cytoplasm. The catalysed reaction is S-sulfanyl-L-cysteinyl-[protein] + uridine(34) in tRNA + AH2 + ATP = 2-thiouridine(34) in tRNA + L-cysteinyl-[protein] + A + AMP + diphosphate + H(+). In terms of biological role, catalyzes the 2-thiolation of uridine at the wobble position (U34) of tRNA, leading to the formation of s(2)U34. This Herpetosiphon aurantiacus (strain ATCC 23779 / DSM 785 / 114-95) protein is tRNA-specific 2-thiouridylase MnmA.